The primary structure comprises 486 residues: UDP-N-acetylmuramate--L-alanine ligase (486 aa).

Position 129-135 (129-135 (GTHGKTT)) interacts with ATP.

Belongs to the MurCDEF family.

Its subcellular location is the cytoplasm. The catalysed reaction is UDP-N-acetyl-alpha-D-muramate + L-alanine + ATP = UDP-N-acetyl-alpha-D-muramoyl-L-alanine + ADP + phosphate + H(+). It functions in the pathway cell wall biogenesis; peptidoglycan biosynthesis. Cell wall formation. This Vibrio cholerae serotype O1 (strain ATCC 39315 / El Tor Inaba N16961) protein is UDP-N-acetylmuramate--L-alanine ligase.